The following is an 805-amino-acid chain: Na(+)/H(+) antiporter subunit A1 (805 aa).

Helical transmembrane passes span 1 to 21, 30 to 50, 79 to 99, 117 to 137, 166 to 186, 201 to 221, 226 to 246, 265 to 285, 300 to 320, 337 to 357, 377 to 397, 427 to 447, 480 to 500, 531 to 551, 591 to 611, 623 to 643, 646 to 666, 671 to 691, 707 to 727, and 766 to 786; these read MSLL…IPFV, LGWF…SYIS, LGLL…LYSI, LFMG…LYLF, MLVT…LSIA, EIQT…GAMT, FPFY…SAYL, IFAV…ITLF, ILAF…GVGA, FTAA…LFMI, LTIM…MAGI, LGIL…VYSI, ILAI…GSII, LGIY…IYLL, LVII…VTPF, PFEL…IFAK, LFSI…FIFF, LALT…LCFY, LVNI…GLIA, and TLFE…MIKL.

Belongs to the CPA3 antiporters (TC 2.A.63) subunit A family. In terms of assembly, may form a heterooligomeric complex that consists of seven subunits: mnhA1, mnhB1, mnhC1, mnhD1, mnhE1, mnhF1 and mnhG1.

Its subcellular location is the cell membrane. Its function is as follows. Mnh complex is a Na(+)/H(+) antiporter involved in Na(+) excretion. This is Na(+)/H(+) antiporter subunit A1 (mnhA1) from Staphylococcus saprophyticus subsp. saprophyticus (strain ATCC 15305 / DSM 20229 / NCIMB 8711 / NCTC 7292 / S-41).